The chain runs to 353 residues: DNA-repair protein XRCC1 (353 aa).

The span at 1-12 (MSQKRNLPSWMS) shows a compositional bias: polar residues. The interval 1 to 57 (MSQKRNLPSWMSSRDPEITPSKSHCKKPKDEGPTEEHNSRNAPSNKSEHAEPSSNTT) is disordered. Residues 28 to 39 (PKDEGPTEEHNS) are compositionally biased toward basic and acidic residues. A BRCT 1 domain is found at 58–146 (EFSKLMEGVV…KLVDIEQYLM (89 aa)). Residues 150–194 (KPWRKSSSPQDANREKREHLSKKPEKQVEKKTETRGTPSTSSKNR) are disordered. Over residues 161–183 (ANREKREHLSKKPEKQVEKKTET) the composition is skewed to basic and acidic residues. Residues 184–194 (RGTPSTSSKNR) show a composition bias toward polar residues. Residues 240-260 (AAEGVLTCLQDAIDSLEQKQD) adopt a coiled-coil conformation. Residues 266–347 (ELWSFVPRVV…EEEIELAYRN (82 aa)) form the BRCT 2 domain.

Homodimer. Interacts with polynucleotide kinase (PNK), DNA polymerase-beta (POLB) and DNA ligase III (LIG3). Interacts with ZDP and ROS1. Binds to various forms of double-stranded DNA (e.g. methylated, unmethylated, with single-nucleotide gap flanked by 3'-phosphate or 5'-phosphate ends).

Its subcellular location is the nucleus. Corrects defective DNA strand-break repair and sister chromatid exchange following treatment with ionizing radiation and alkylating agents. Involved in DNA demethylation pathway by stimulating cytosine methylation (5-meC) excision, gap tailoring, and DNA ligation. The chain is DNA-repair protein XRCC1 from Arabidopsis thaliana (Mouse-ear cress).